The primary structure comprises 268 residues: Hydroxyethylthiazole kinase (268 aa).

Residue Met-45 coordinates substrate. The ATP site is built by Arg-121 and Thr-167. Gly-194 lines the substrate pocket.

It belongs to the Thz kinase family. The cofactor is Mg(2+).

It catalyses the reaction 5-(2-hydroxyethyl)-4-methylthiazole + ATP = 4-methyl-5-(2-phosphooxyethyl)-thiazole + ADP + H(+). The protein operates within cofactor biosynthesis; thiamine diphosphate biosynthesis; 4-methyl-5-(2-phosphoethyl)-thiazole from 5-(2-hydroxyethyl)-4-methylthiazole: step 1/1. In terms of biological role, catalyzes the phosphorylation of the hydroxyl group of 4-methyl-5-beta-hydroxyethylthiazole (THZ). In Bacillus cereus (strain ZK / E33L), this protein is Hydroxyethylthiazole kinase.